We begin with the raw amino-acid sequence, 208 residues long: RNA chaperone ProQ (208 aa).

Composition is skewed to basic and acidic residues over residues 99–115 and 126–135; these read AQET…EKNK and PAKDKPENTA. Residues 99-149 form a disordered region; sequence AQETLKESKAKVAEKNKATNKAAAKKAPAKDKPENTAKAKPKTAKKPAKPK. The span at 137 to 149 shows a compositional bias: basic residues; it reads AKPKTAKKPAKPK.

It belongs to the ProQ family.

The protein resides in the cytoplasm. Its function is as follows. RNA chaperone with significant RNA binding, RNA strand exchange and RNA duplexing activities. This is RNA chaperone ProQ from Idiomarina loihiensis (strain ATCC BAA-735 / DSM 15497 / L2-TR).